A 692-amino-acid polypeptide reads, in one-letter code: Elongation factor G (692 aa).

The tr-type G domain maps to 8–282 (KDYRNIGIMA…AVVDYLPSPL (275 aa)). GTP contacts are provided by residues 17 to 24 (AHIDAGKT), 81 to 85 (DTPGH), and 135 to 138 (NKMD).

It belongs to the TRAFAC class translation factor GTPase superfamily. Classic translation factor GTPase family. EF-G/EF-2 subfamily.

It localises to the cytoplasm. Its function is as follows. Catalyzes the GTP-dependent ribosomal translocation step during translation elongation. During this step, the ribosome changes from the pre-translocational (PRE) to the post-translocational (POST) state as the newly formed A-site-bound peptidyl-tRNA and P-site-bound deacylated tRNA move to the P and E sites, respectively. Catalyzes the coordinated movement of the two tRNA molecules, the mRNA and conformational changes in the ribosome. This chain is Elongation factor G (fusA), found in Mycoplasmopsis pulmonis (strain UAB CTIP) (Mycoplasma pulmonis).